We begin with the raw amino-acid sequence, 415 residues long: Actin-like protein 9 (415 aa).

A disordered region spans residues 1–22 (MDVNGHPKFQPSPETDGPLPLT).

It belongs to the actin family. As to quaternary structure, interacts with ACTL7A.

The protein resides in the cytoplasmic vesicle. The protein localises to the secretory vesicle. Its subcellular location is the acrosome. It localises to the cytoplasm. It is found in the cytoskeleton. The protein resides in the perinuclear theca. Its function is as follows. Testis-specic protein that plays an important role in fusion of proacrosomal vesicles and perinuclear theca formation. This Mus musculus (Mouse) protein is Actin-like protein 9 (Actl9).